The sequence spans 394 residues: Aspergillopepsin-1 (394 aa).

Residues 1-20 (MVVFSKVTAAVFGLATIASA) form the signal peptide. The propeptide at 21 to 69 (APAPPTRKGFTVQQQARPAQKKQVNLPAMYAHALTKFGGSVPESVKVAA) is activation peptide. The Peptidase A1 domain occupies 85-391 (YLTPVNVGGT…DSEGPRLGFA (307 aa)). Catalysis depends on residues aspartate 101 and aspartate 283. The cysteines at positions 319 and 354 are disulfide-linked.

It belongs to the peptidase A1 family. Monomer.

It localises to the secreted. It carries out the reaction Hydrolysis of proteins with broad specificity. Generally favors hydrophobic residues in P1 and P1', but also accepts Lys in P1, which leads to activation of trypsinogen. Does not clot milk.. Functionally, secreted aspartic endopeptidase that allows assimilation of proteinaceous substrates. The scissile peptide bond is attacked by a nucleophilic water molecule activated by two aspartic residues in the active site. Shows a broad primary substrate specificity. Favors hydrophobic residues at the P1 and P1' positions, but also accepts a lysine residue in the P1 position, leading to the activation of trypsinogen and chymotrypsinogen A. The sequence is that of Aspergillopepsin-1 (pepA) from Aspergillus clavatus (strain ATCC 1007 / CBS 513.65 / DSM 816 / NCTC 3887 / NRRL 1 / QM 1276 / 107).